The sequence spans 91 residues: Small ribosomal subunit protein uS15 (91 aa).

It belongs to the universal ribosomal protein uS15 family. Part of the 30S ribosomal subunit. Forms a bridge to the 50S subunit in the 70S ribosome, contacting the 23S rRNA.

In terms of biological role, one of the primary rRNA binding proteins, it binds directly to 16S rRNA where it helps nucleate assembly of the platform of the 30S subunit by binding and bridging several RNA helices of the 16S rRNA. Its function is as follows. Forms an intersubunit bridge (bridge B4) with the 23S rRNA of the 50S subunit in the ribosome. This Rickettsia africae (strain ESF-5) protein is Small ribosomal subunit protein uS15.